Reading from the N-terminus, the 199-residue chain is ATP-dependent Clp protease proteolytic subunit (199 aa).

S97 serves as the catalytic Nucleophile. H122 is an active-site residue.

This sequence belongs to the peptidase S14 family. Fourteen ClpP subunits assemble into 2 heptameric rings which stack back to back to give a disk-like structure with a central cavity, resembling the structure of eukaryotic proteasomes.

It is found in the cytoplasm. It carries out the reaction Hydrolysis of proteins to small peptides in the presence of ATP and magnesium. alpha-casein is the usual test substrate. In the absence of ATP, only oligopeptides shorter than five residues are hydrolyzed (such as succinyl-Leu-Tyr-|-NHMec, and Leu-Tyr-Leu-|-Tyr-Trp, in which cleavage of the -Tyr-|-Leu- and -Tyr-|-Trp bonds also occurs).. In terms of biological role, cleaves peptides in various proteins in a process that requires ATP hydrolysis. Has a chymotrypsin-like activity. Plays a major role in the degradation of misfolded proteins. In Geobacter metallireducens (strain ATCC 53774 / DSM 7210 / GS-15), this protein is ATP-dependent Clp protease proteolytic subunit.